A 374-amino-acid polypeptide reads, in one-letter code: Gustatory receptor 23a (374 aa).

The Cytoplasmic segment spans residues 1–6 (MFPPTR). A helical membrane pass occupies residues 7-27 (VQASSRVVLKIFHFILVAFSL). At 28–36 (RSRRLSRLV) the chain is on the extracellular side. Residues 37-57 (LWLQFLGWLTWFISMWTQSVI) traverse the membrane as a helical segment. The Cytoplasmic segment spans residues 58–72 (YAQTIDCTLDCSLRH). A helical transmembrane segment spans residues 73–93 (ILTFFQTVSHAFIVVTSFLDG). Residues 94 to 112 (FRIKQDQLDEPIAFEDSDP) are Extracellular-facing. The chain crosses the membrane as a helical span at residues 113-133 (WLAFTVLAMLVPTLGVEYLVC). Residues 134 to 226 (SNAPEYAFRI…YNDLHYLFVR (93 aa)) are Cytoplasmic-facing. A helical transmembrane segment spans residues 227–247 (INGYFGGSLLTIIIVHFAIFV). Topologically, residues 248–263 (SNSYWLFVDIRTRPWR) are extracellular. A helical membrane pass occupies residues 264 to 284 (IYAILLNLGFIFNVALQMAAA). Residues 285-343 (CWHCQQSYNLGRQIGCLISKLVKPQGSKLYNDLVSEFSLQTLHQRFVVTAKDFFSLNLH) are Cytoplasmic-facing. Residues 344-364 (LLSSMFAAVVTYLVILIQFMF) traverse the membrane as a helical segment. Over 365 to 374 (AERSSTRGSG) the chain is Extracellular.

The protein belongs to the insect chemoreceptor superfamily. Gustatory receptor (GR) family. Gr2a subfamily. As to expression, expressed in the adult labellar chemosensory neurons and labral sense organ. Expressed in neurons of the dorsal pharyngeal sense organ of larvae.

It localises to the cell membrane. In terms of biological role, probable gustatory receptor which mediates acceptance or avoidance behavior, depending on its substrates. The sequence is that of Gustatory receptor 23a (Gr23a) from Drosophila melanogaster (Fruit fly).